The sequence spans 136 residues: Transcription antitermination protein NusB (136 aa).

The protein belongs to the NusB family.

Its function is as follows. Involved in transcription antitermination. Required for transcription of ribosomal RNA (rRNA) genes. Binds specifically to the boxA antiterminator sequence of the ribosomal RNA (rrn) operons. The sequence is that of Transcription antitermination protein NusB from Arthrobacter sp. (strain FB24).